We begin with the raw amino-acid sequence, 363 residues long: Endopolygalacturonase A (363 aa).

Residues 1–20 (MQLLQSSVIAATVGAALVAA) form the signal peptide. Positions 21–28 (VPVELEAR) are excised as a propeptide. The cysteines at positions 31 and 46 are disulfide-linked. PbH1 repeat units follow at residues 158 to 187 (SDNL…DVGS), 188 to 209 (STYI…AINS), 210 to 230 (GSHI…SIGS), 239 to 260 (VEDV…RIKT), 268 to 290 (VSNV…IVEQ), and 302 to 347 (TNGI…SITG). A glycan (N-linked (GlcNAc...) asparagine) is linked at Asn162. The active-site Proton donor is the Asp202. A disulfide bond links Cys204 and Cys220. Residue His224 is part of the active site. 2 disulfide bridges follow: Cys330/Cys335 and Cys354/Cys363.

It belongs to the glycosyl hydrolase 28 family.

Its subcellular location is the secreted. It carries out the reaction (1,4-alpha-D-galacturonosyl)n+m + H2O = (1,4-alpha-D-galacturonosyl)n + (1,4-alpha-D-galacturonosyl)m.. Functionally, involved in maceration and soft-rotting of plant tissue. Hydrolyzes the 1,4-alpha glycosidic bonds of de-esterified pectate in the smooth region of the plant cell wall. The polypeptide is Endopolygalacturonase A (pgaA) (Aspergillus flavus (strain ATCC MYA-384 / AF70)).